The following is a 182-amino-acid chain: Cbp/p300-interacting transactivator 4 (182 aa).

Positions 22 to 129 are disordered; the sequence is GPHAPRTLQP…PPPPPPALGC (108 aa). The segment covering 64–89 has biased composition (polar residues); the sequence is SPVSFQPFPVSQSPGAGSTHLQSAAT. The segment covering 100 to 117 has biased composition (low complexity); the sequence is AAAGGPSPLQPAPGAAAS.

It belongs to the CITED family. Interacts via its C-terminal region with the CH1 domain of CREBBP and EP300. Interacts with all TFAP2/AP-2 isoforms. Strongly expressed in heart, spleen and testis, and weakly in liver and kidney.

The protein resides in the nucleus. Its subcellular location is the cytoplasm. Functionally, acts as a transcriptional coactivator for TFAP2/AP-2. Enhances estrogen-dependent transactivation mediated by estrogen receptors. May function as an inhibitor of transactivation by HIF1A by disrupting HIF1A interaction with CREBBP. May be involved in regulation of gene expression during development and differentiation of blood cells, endothelial cells and mammary epithelial cells. The sequence is that of Cbp/p300-interacting transactivator 4 from Mus musculus (Mouse).